Reading from the N-terminus, the 173-residue chain is Zinc finger matrin-type protein 5 (173 aa).

The C3H1-type zinc-finger motif lies at 51–79 (ERSKEVCRKFVQTGQCVFGTSCRFSHMSE). The tract at residues 83 to 111 (KMLEQKIDDEKRQKEDPDQDGSSERSVDE) is disordered.

Component of the U11/U12 snRNPs that are part of the U12-type spliceosome.

It localises to the nucleus. This is Zinc finger matrin-type protein 5 (zmat5) from Danio rerio (Zebrafish).